The primary structure comprises 1033 residues: MFGSKRLKNVKEAFKSLKGQNSETPIENSKASFKSKNSKTSTISKDAKSSSSLKIPISSNNKNKIFSLAETNKYGMSSKPIAAAFDFTQNLLAIATVTGEVHIYGQQQVEVVIKLEDRSAIKEMRFVKGIYLVVINAKDTVYVLSLYSQKVLTTVFVPGKITSIDTDASLDWMLIGLQNGSMIVYDIDRDQLSSFKLDNLQKSSFFPAARLSPIVSIQWNPRDIGTVLISYEYVTLTYSLVENEIKQSFIYELPPFAPGGDFSEKTNEKRTPKVIQSLYHPNSLHIITIHEDNSLVFWDANSGHMIMARTVFETEINVPQPDYIRDSSTNAAKISKVYWMCENNPEYTSLLISHKSISRGDNQSLTMIDLGYTPRYSITSYEGMKNYYANPKQMKIFPLPTNVPIVNILPIPRQSPYFAGCHNPGLILLILGNGEIETMLYPSGIFTDKASLFPQNLSWLRPLATTSMAASVPNKLWLGALSAAQNKDYLLKGGVRTKRQKLPAEYGTAFITGHSNGSVRIYDASHGDIQDNASFEVNLSRTLNKAKELAVDKISFAAETLELAVSIETGDVVLFKYEVNQFYSVENRPESGDLEMNFRRFSLNNTNGVLVDVRDRAPTGVRQGFMPSTAVHANKGKTSAINNSNIGFVGIAYAAGSLMLIDRRGPAIIYMENIREISGAQSACVTCIEFVIMEYGDDGYSSILMVCGTDMGEVITYKILPASGGKFDVQLMDITNVTSKGPIHKIDAFSKETKSSCLATIPKMQNLSKGLCIPGIVLITGFDDIRLITLGKSKSTHKGFKYPLAATGLSYISTVEKNNDRKNLTVIITLEINGHLRVFTIPDFKEQMSEHIPFPIAAKYITESSVLRNGDIAIRVSEFQASLFSTVKEQDTLAPVSDTLYINGIRIPYRPQVNSLQWARGTVYCTPAQLNELLGGVNRPASKYKESIIAEGSFSERSSDDNNANHPEHQYTKPTRKGRNSSYGVLRNVSRAVETRWDAVEDRFNDYATAMGETMNEAVEQTGKDVMKGALGF.

The segment at 16–45 (SLKGQNSETPIENSKASFKSKNSKTSTISK) is disordered. Over residues 18 to 27 (KGQNSETPIE) the composition is skewed to polar residues. Residues 28-45 (NSKASFKSKNSKTSTISK) show a composition bias toward low complexity. WD repeat units follow at residues 81–114 (IAAA…VVIK), 121–156 (IKEM…TTVF), 161–197 (ITSI…SFKL), 216–249 (SIQW…KQSF), 274–309 (VIQS…IMAR), 333–397 (KISK…MKIF), 405–440 (IVNI…ETML), 464–538 (ATTS…FEVN), 552–631 (DKIS…STAV), 638–673 (TSAI…YMEN), 685–736 (VTCI…DITN), 745–799 (KIDA…THKG), 804–851 (LAAT…MSEH), and 865–888 (SVLR…STVK). Ser591 and Ser602 each carry phosphoserine. A disordered region spans residues 953–984 (SFSERSSDDNNANHPEHQYTKPTRKGRNSSYG).

It belongs to the WD repeat L(2)GL family. Interacts with MYO2 and SEC9.

It localises to the cytoplasm. The protein localises to the cell membrane. In terms of biological role, acts as an allosteric regulator of polarized exocytosis by promoting the targeted fusion of vesicles with the plasma membrane. Coordinates the spatial and temporal nature of both Rab-dependent tethering and SNARE-dependent membrane fusion of exocytic vesicles with the plasma membrane. Required for targeting of the sodium pumping ATPase ENA1 to the Cell Surface, thus being involved in maintenance of ion homeostasis in cells exposed to NaCl stress. May be involved in the targeting of the myosin proteins to their intrinsic pathways. Multicopy suppressor of RHO3. May also participate in the maintenance of cell polarity and bud growth. In Saccharomyces cerevisiae (strain ATCC 204508 / S288c) (Baker's yeast), this protein is Lethal(2) giant larvae protein homolog SRO7 (SRO7).